Consider the following 671-residue polypeptide: Talaropentaene synthase (671 aa).

Aspartate 92 contributes to the Mg(2+) binding site. Residues 92–96 (DDMTD) carry the DDXXD 1 motif. The NSE/DTE motif lies at 223 to 231 (NDLYSYEKE). Isopentenyl diphosphate-binding residues include lysine 389, arginine 392, and histidine 421. The Mg(2+) site is built by aspartate 428 and aspartate 432. Residues 428–432 (DDIED) carry the DDXXD 2 motif. Position 437 (arginine 437) interacts with dimethylallyl diphosphate. Arginine 438 serves as a coordination point for isopentenyl diphosphate. Positions 515, 516, 551, 558, 568, and 578 each coordinate dimethylallyl diphosphate.

In the N-terminal section; belongs to the terpene synthase family. It in the C-terminal section; belongs to the FPP/GGPP synthase family. Mg(2+) serves as cofactor.

The enzyme catalyses 5 isopentenyl diphosphate + dimethylallyl diphosphate = all-trans-hexaprenyl diphosphate + 5 diphosphate. It carries out the reaction all-trans-hexaprenyl diphosphate = talaropentaene + diphosphate. Bifunctional terpene synthase that converts dimethylallyl diphosphate (DMAPP) and isopentenyl diphosphate (IPP) into talaropentaene as a single product. The C-terminal prenyltransferase (PT) domain of MpMS catalyzes formation of hexaprenyl diphosphate (HexPP), whereas the N-terminal terpene cyclase (TC) domain catalyzes the cyclization of HexPP to talaropentaene. The chain is Talaropentaene synthase from Talaromyces verruculosus (Penicillium verruculosum).